The following is an 842-amino-acid chain: Elongation factor 2 (842 aa).

The region spanning 17-253 (TNVRNMSVIA…LWGDSYFNPK (237 aa)) is the tr-type G domain. Residues 26-33 (AHVDHGKS), 158-161 (NKVD), and 213-215 (SGL) each bind GTP. Diphthamide is present on His699.

Belongs to the TRAFAC class translation factor GTPase superfamily. Classic translation factor GTPase family. EF-G/EF-2 subfamily.

It is found in the cytoplasm. The catalysed reaction is GTP + H2O = GDP + phosphate + H(+). In terms of biological role, catalyzes the GTP-dependent ribosomal translocation step during translation elongation. During this step, the ribosome changes from the pre-translocational (PRE) to the post-translocational (POST) state as the newly formed A-site-bound peptidyl-tRNA and P-site-bound deacylated tRNA move to the P and E sites, respectively. Catalyzes the coordinated movement of the two tRNA molecules, the mRNA and conformational changes in the ribosome. In Komagataella pastoris (Yeast), this protein is Elongation factor 2 (EFT1).